The sequence spans 448 residues: Phosphoglucosamine mutase (448 aa).

Ser100 acts as the Phosphoserine intermediate in catalysis. 4 residues coordinate Mg(2+): Ser100, Asp240, Asp242, and Asp244. Ser100 carries the post-translational modification Phosphoserine.

The protein belongs to the phosphohexose mutase family. Requires Mg(2+) as cofactor. In terms of processing, activated by phosphorylation.

The catalysed reaction is alpha-D-glucosamine 1-phosphate = D-glucosamine 6-phosphate. In terms of biological role, catalyzes the conversion of glucosamine-6-phosphate to glucosamine-1-phosphate. This chain is Phosphoglucosamine mutase, found in Bacillus cereus (strain G9842).